A 289-amino-acid chain; its full sequence is NAD kinase (289 aa).

The active-site Proton acceptor is Asp63. Residues 63–64 (DG), Arg68, 138–139 (ND), Arg149, Asp168, 179–184 (TGYSLS), and Gln238 each bind NAD(+).

The protein belongs to the NAD kinase family. The cofactor is a divalent metal cation.

The protein resides in the cytoplasm. The catalysed reaction is NAD(+) + ATP = ADP + NADP(+) + H(+). Its function is as follows. Involved in the regulation of the intracellular balance of NAD and NADP, and is a key enzyme in the biosynthesis of NADP. Catalyzes specifically the phosphorylation on 2'-hydroxyl of the adenosine moiety of NAD to yield NADP. The sequence is that of NAD kinase from Gemmatimonas aurantiaca (strain DSM 14586 / JCM 11422 / NBRC 100505 / T-27).